The sequence spans 207 residues: Large ribosomal subunit protein uL4 (207 aa).

Residues 44–77 are disordered; the sequence is LRQGTHKTKGRSEVRGGGRKPWRQKGTGRARQGS. The segment covering 60–71 has biased composition (basic residues); it reads GGRKPWRQKGTG.

It belongs to the universal ribosomal protein uL4 family. In terms of assembly, part of the 50S ribosomal subunit.

Functionally, one of the primary rRNA binding proteins, this protein initially binds near the 5'-end of the 23S rRNA. It is important during the early stages of 50S assembly. It makes multiple contacts with different domains of the 23S rRNA in the assembled 50S subunit and ribosome. Forms part of the polypeptide exit tunnel. This Shouchella clausii (strain KSM-K16) (Alkalihalobacillus clausii) protein is Large ribosomal subunit protein uL4.